We begin with the raw amino-acid sequence, 794 residues long: Lon protease (794 aa).

The 194-residue stretch at 29–222 (VPLLPLRGVL…TLISIIQDEQ (194 aa)) folds into the Lon N-terminal domain. 374 to 381 (GPPGVGKT) provides a ligand contact to ATP. Residues 610 to 791 (TDQVGMATGL…DEVLEHALVG (182 aa)) form the Lon proteolytic domain. Residues Ser-697 and Lys-740 contribute to the active site.

Belongs to the peptidase S16 family. As to quaternary structure, homohexamer. Organized in a ring with a central cavity.

It is found in the cytoplasm. It catalyses the reaction Hydrolysis of proteins in presence of ATP.. In terms of biological role, ATP-dependent serine protease that mediates the selective degradation of mutant and abnormal proteins as well as certain short-lived regulatory proteins. Required for cellular homeostasis and for survival from DNA damage and developmental changes induced by stress. Degrades polypeptides processively to yield small peptide fragments that are 5 to 10 amino acids long. Binds to DNA in a double-stranded, site-specific manner. This Bacillus thuringiensis (strain Al Hakam) protein is Lon protease.